The primary structure comprises 649 residues: UvrABC system protein C (649 aa).

A GIY-YIG domain is found at 12-91 (SSPGVYLMKS…IKQHRPKYNI (80 aa)). The UVR domain occupies 201–236 (NEVARLYRSKMNLASEQMRYEDAARYRDLLRAIEVT). The segment at 603 to 649 (RLHGGPLPNPPPPGEGAMGDGSIPSPRNGVMDDSIPSPSGRGWPKAG) is disordered.

It belongs to the UvrC family. In terms of assembly, interacts with UvrB in an incision complex.

Its subcellular location is the cytoplasm. The UvrABC repair system catalyzes the recognition and processing of DNA lesions. UvrC both incises the 5' and 3' sides of the lesion. The N-terminal half is responsible for the 3' incision and the C-terminal half is responsible for the 5' incision. The polypeptide is UvrABC system protein C (Geobacter sp. (strain M21)).